Here is a 228-residue protein sequence, read N- to C-terminus: tRNA (guanine-N(1)-)-methyltransferase (228 aa).

S-adenosyl-L-methionine is bound by residues glycine 108 and valine 127–leucine 132.

It belongs to the RNA methyltransferase TrmD family. In terms of assembly, homodimer.

Its subcellular location is the cytoplasm. The enzyme catalyses guanosine(37) in tRNA + S-adenosyl-L-methionine = N(1)-methylguanosine(37) in tRNA + S-adenosyl-L-homocysteine + H(+). Its function is as follows. Specifically methylates guanosine-37 in various tRNAs. This Metamycoplasma arthritidis (strain 158L3-1) (Mycoplasma arthritidis) protein is tRNA (guanine-N(1)-)-methyltransferase.